A 215-amino-acid chain; its full sequence is Probable GTP-binding protein EngB (215 aa).

Positions 31–215 (GPPEIAFAGR…RTAILQAVVQ (185 aa)) constitute an EngB-type G domain. Residues 39 to 46 (GRSNVGKS), 66 to 70 (GRTQE), 93 to 96 (DMPG), 160 to 163 (TKSD), and 194 to 196 (TSA) contribute to the GTP site. Ser-46 and Thr-68 together coordinate Mg(2+).

It belongs to the TRAFAC class TrmE-Era-EngA-EngB-Septin-like GTPase superfamily. EngB GTPase family. It depends on Mg(2+) as a cofactor.

Necessary for normal cell division and for the maintenance of normal septation. This Bartonella bacilliformis (strain ATCC 35685 / KC583 / Herrer 020/F12,63) protein is Probable GTP-binding protein EngB.